A 309-amino-acid polypeptide reads, in one-letter code: Elongation factor Ts (309 aa).

Positions 98–101 (TDFV) are involved in Mg(2+) ion dislocation from EF-Tu.

This sequence belongs to the EF-Ts family.

Its subcellular location is the cytoplasm. Its function is as follows. Associates with the EF-Tu.GDP complex and induces the exchange of GDP to GTP. It remains bound to the aminoacyl-tRNA.EF-Tu.GTP complex up to the GTP hydrolysis stage on the ribosome. The protein is Elongation factor Ts of Orientia tsutsugamushi (strain Boryong) (Rickettsia tsutsugamushi).